The chain runs to 139 residues: Small ribosomal subunit protein uS12 (139 aa).

The disordered stretch occupies residues 1-21 (MPTINQLVRKGRKAVQEKSTA). Asp-102 carries the 3-methylthioaspartic acid modification.

It belongs to the universal ribosomal protein uS12 family. In terms of assembly, part of the 30S ribosomal subunit. Contacts proteins S8 and S17. May interact with IF1 in the 30S initiation complex.

In terms of biological role, with S4 and S5 plays an important role in translational accuracy. Functionally, interacts with and stabilizes bases of the 16S rRNA that are involved in tRNA selection in the A site and with the mRNA backbone. Located at the interface of the 30S and 50S subunits, it traverses the body of the 30S subunit contacting proteins on the other side and probably holding the rRNA structure together. The combined cluster of proteins S8, S12 and S17 appears to hold together the shoulder and platform of the 30S subunit. In Alkaliphilus metalliredigens (strain QYMF), this protein is Small ribosomal subunit protein uS12.